The chain runs to 580 residues: Phosphatase and actin regulator 1 (580 aa).

A phosphoserine mark is found at Ser67 and Ser78. Thr104 is modified (phosphothreonine). Residues 108–129 (RRRSKFANLGRIFKPWKWRKKK) carry the Nuclear localization signal motif. An RPEL 1 repeat occupies 138 to 163 (AALERKISMRQSREELIKRGVLKEIY). Disordered stretches follow at residues 330–350 (SEQR…SSDG) and 374–408 (DNKE…DDAS). Residues 337–348 (STSYHSSGLHSS) are compositionally biased toward low complexity. Over residues 374 to 383 (DNKENVPHEP) the composition is skewed to basic and acidic residues. Residues 395 to 407 (EEEEEEEDEDDDA) show a composition bias toward acidic residues. 3 RPEL repeats span residues 422–447 (DSLA…PRQT), 460–485 (TKLT…KPRN), and 498–523 (RRLT…IRFS). The segment at 463–494 (TRRLSQRPTAEELEQRNILKPRNEQEEQEEKR) is disordered. At Ser467 the chain carries Phosphoserine. Basic and acidic residues predominate over residues 471–494 (TAEELEQRNILKPRNEQEEQEEKR). Ser505 carries the phosphoserine modification.

The protein belongs to the phosphatase and actin regulator family. Interacts (via RPEL repeats) with ACTA1 and PPP1CA; ACTA1 and PPP1CA compete for the same binding site.

It localises to the cytoplasm. The protein localises to the synapse. It is found in the nucleus. Functionally, binds actin monomers (G actin) and plays a role in multiple processes including the regulation of actin cytoskeleton dynamics, actin stress fibers formation, cell motility and survival, formation of tubules by endothelial cells, and regulation of PPP1CA activity. Involved in the regulation of cortical neuron migration and dendrite arborization. The protein is Phosphatase and actin regulator 1 (Phactr1) of Mus musculus (Mouse).